The primary structure comprises 350 residues: Glycerol-3-phosphate dehydrogenase [NAD(+)], cytoplasmic (350 aa).

NAD(+) is bound by residues 11-16 (GSGNWG), Phe-98, Lys-121, and Ala-155. Substrate is bound at residue Lys-121. Lys-206 serves as the catalytic Proton acceptor. Residues Arg-270 and Gln-299 each coordinate NAD(+). 270-271 (RN) provides a ligand contact to substrate.

The protein belongs to the NAD-dependent glycerol-3-phosphate dehydrogenase family. Homodimer.

The protein localises to the cytoplasm. It catalyses the reaction sn-glycerol 3-phosphate + NAD(+) = dihydroxyacetone phosphate + NADH + H(+). It participates in phospholipid metabolism; alpha-glycerophosphate cycle. This chain is Glycerol-3-phosphate dehydrogenase [NAD(+)], cytoplasmic (Gpdh1), found in Drosophila ezoana (Fruit fly).